A 286-amino-acid polypeptide reads, in one-letter code: Energy-coupling factor transporter ATP-binding protein EcfA2 (286 aa).

An ABC transporter domain is found at 3–245 (IKIENLTYTY…IDTLEKVGLA (243 aa)). An ATP-binding site is contributed by 40 to 47 (GHTGSGKS).

This sequence belongs to the ABC transporter superfamily. Energy-coupling factor EcfA family. As to quaternary structure, forms a stable energy-coupling factor (ECF) transporter complex composed of 2 membrane-embedded substrate-binding proteins (S component), 2 ATP-binding proteins (A component) and 2 transmembrane proteins (T component).

It is found in the cell membrane. Its function is as follows. ATP-binding (A) component of a common energy-coupling factor (ECF) ABC-transporter complex. Unlike classic ABC transporters this ECF transporter provides the energy necessary to transport a number of different substrates. In Clostridium acetobutylicum (strain ATCC 824 / DSM 792 / JCM 1419 / IAM 19013 / LMG 5710 / NBRC 13948 / NRRL B-527 / VKM B-1787 / 2291 / W), this protein is Energy-coupling factor transporter ATP-binding protein EcfA2.